A 116-amino-acid chain; its full sequence is S-adenosylmethionine decarboxylase proenzyme (116 aa).

Residue Ser62 is the Schiff-base intermediate with substrate; via pyruvic acid of the active site. Ser62 is modified (pyruvic acid (Ser); by autocatalysis). His67 acts as the Proton acceptor; for processing activity in catalysis. Cys82 acts as the Proton donor; for catalytic activity in catalysis.

This sequence belongs to the prokaryotic AdoMetDC family. Type 1 subfamily. In terms of assembly, heterotetramer of two alpha and two beta chains arranged as a dimer of alpha/beta heterodimers. Pyruvate is required as a cofactor. Is synthesized initially as an inactive proenzyme. Formation of the active enzyme involves a self-maturation process in which the active site pyruvoyl group is generated from an internal serine residue via an autocatalytic post-translational modification. Two non-identical subunits are generated from the proenzyme in this reaction, and the pyruvate is formed at the N-terminus of the alpha chain, which is derived from the carboxyl end of the proenzyme. The post-translation cleavage follows an unusual pathway, termed non-hydrolytic serinolysis, in which the side chain hydroxyl group of the serine supplies its oxygen atom to form the C-terminus of the beta chain, while the remainder of the serine residue undergoes an oxidative deamination to produce ammonia and the pyruvoyl group blocking the N-terminus of the alpha chain.

The enzyme catalyses S-adenosyl-L-methionine + H(+) = S-adenosyl 3-(methylsulfanyl)propylamine + CO2. The protein operates within amine and polyamine biosynthesis; S-adenosylmethioninamine biosynthesis; S-adenosylmethioninamine from S-adenosyl-L-methionine: step 1/1. Catalyzes the decarboxylation of S-adenosylmethionine to S-adenosylmethioninamine (dcAdoMet), the propylamine donor required for the synthesis of the polyamines spermine and spermidine from the diamine putrescine. The polypeptide is S-adenosylmethionine decarboxylase proenzyme (Thermomicrobium roseum (strain ATCC 27502 / DSM 5159 / P-2)).